Consider the following 212-residue polypeptide: FMN-dependent NAD(P)H:quinone oxidoreductase 1 (212 aa).

FMN contacts are provided by residues Ser10, 16–18 (SQS), and 97–100 (MYNF). 2 residues coordinate substrate: Asn99 and Tyr131. FMN-binding positions include 145 to 148 (SRGG) and Glu187. Substrate is bound at residue Glu188.

This sequence belongs to the azoreductase type 1 family. In terms of assembly, homodimer. Homotetramer formed by a dimer of dimers when the ionic strength is high. Requires FMN as cofactor.

It catalyses the reaction 2 a quinone + NADPH + H(+) = 2 a 1,4-benzosemiquinone + NADP(+). It carries out the reaction 2 a quinone + NADH + H(+) = 2 a 1,4-benzosemiquinone + NAD(+). The catalysed reaction is N,N-dimethyl-1,4-phenylenediamine + anthranilate + 2 NAD(+) = 2-(4-dimethylaminophenyl)diazenylbenzoate + 2 NADH + 2 H(+). Azoreductase activity increases with salt strength. Functionally, quinone reductase that provides resistance to thiol-specific stress caused by electrophilic quinones. Shows a preference for benzoquinones. Its function is as follows. Also exhibits azoreductase activity. Catalyzes the reductive cleavage of the azo bond in aromatic azo compounds to the corresponding amines. NADPH is the preferred electron donor for azoreductase activity, but it can also use NADH. Can reduce different classes of azo dyes, including the common azo dyes methyl red and p-aminoazobenzene sulfonamide (PAABSA). Can activate several azo pro-drugs used in the treatment of inflammatory bowel disease (IBD), including balsalazide, sulfasalazine and olsalazine. Also acts as a nitrodeductase, and can reduce and hence activate the nitroaromatic drug nitrofurazone, a broad spectrum antibiotic. In Pseudomonas aeruginosa (strain ATCC 15692 / DSM 22644 / CIP 104116 / JCM 14847 / LMG 12228 / 1C / PRS 101 / PAO1), this protein is FMN-dependent NAD(P)H:quinone oxidoreductase 1.